Here is a 112-residue protein sequence, read N- to C-terminus: Peptidyl-tRNA hydrolase (112 aa).

The protein belongs to the PTH2 family.

It localises to the cytoplasm. The catalysed reaction is an N-acyl-L-alpha-aminoacyl-tRNA + H2O = an N-acyl-L-amino acid + a tRNA + H(+). Its function is as follows. The natural substrate for this enzyme may be peptidyl-tRNAs which drop off the ribosome during protein synthesis. The chain is Peptidyl-tRNA hydrolase from Methanothermobacter thermautotrophicus (strain ATCC 29096 / DSM 1053 / JCM 10044 / NBRC 100330 / Delta H) (Methanobacterium thermoautotrophicum).